We begin with the raw amino-acid sequence, 425 residues long: Enolase 2 (425 aa).

A (2R)-2-phosphoglycerate-binding site is contributed by Gln-163. Catalysis depends on Glu-205, which acts as the Proton donor. Mg(2+)-binding residues include Asp-242, Glu-285, and Asp-312. Lys-337, Arg-366, Ser-367, and Lys-388 together coordinate (2R)-2-phosphoglycerate. The Proton acceptor role is filled by Lys-337.

Belongs to the enolase family. Requires Mg(2+) as cofactor.

It localises to the cytoplasm. The protein localises to the secreted. The protein resides in the cell surface. The catalysed reaction is (2R)-2-phosphoglycerate = phosphoenolpyruvate + H2O. It functions in the pathway carbohydrate degradation; glycolysis; pyruvate from D-glyceraldehyde 3-phosphate: step 4/5. Functionally, catalyzes the reversible conversion of 2-phosphoglycerate (2-PG) into phosphoenolpyruvate (PEP). It is essential for the degradation of carbohydrates via glycolysis. The polypeptide is Enolase 2 (Cupriavidus metallidurans (strain ATCC 43123 / DSM 2839 / NBRC 102507 / CH34) (Ralstonia metallidurans)).